The chain runs to 55 residues: Large ribosomal subunit protein bL33 (55 aa).

Belongs to the bacterial ribosomal protein bL33 family.

The polypeptide is Large ribosomal subunit protein bL33 (Ruegeria pomeroyi (strain ATCC 700808 / DSM 15171 / DSS-3) (Silicibacter pomeroyi)).